The chain runs to 812 residues: Xaa-Pro dipeptidyl-peptidase (812 aa).

Active-site charge relay system residues include serine 372, aspartate 492, and histidine 523.

It belongs to the peptidase S15 family. In terms of assembly, homodimer.

The protein localises to the cytoplasm. It carries out the reaction Hydrolyzes Xaa-Pro-|- bonds to release unblocked, N-terminal dipeptides from substrates including Ala-Pro-|-p-nitroanilide and (sequentially) Tyr-Pro-|-Phe-Pro-|-Gly-Pro-|-Ile.. Its function is as follows. Removes N-terminal dipeptides sequentially from polypeptides having unsubstituted N-termini provided that the penultimate residue is proline. This Pediococcus pentosaceus (strain ATCC 25745 / CCUG 21536 / LMG 10740 / 183-1w) protein is Xaa-Pro dipeptidyl-peptidase.